A 195-amino-acid polypeptide reads, in one-letter code: Pyridoxal 5'-phosphate synthase subunit PdxT (195 aa).

G46–S48 provides a ligand contact to L-glutamine. C78 functions as the Nucleophile in the catalytic mechanism. Residues R106 and I134–R135 contribute to the L-glutamine site. Residues H170 and E172 each act as charge relay system in the active site.

Belongs to the glutaminase PdxT/SNO family. In the presence of PdxS, forms a dodecamer of heterodimers. Only shows activity in the heterodimer.

It carries out the reaction aldehydo-D-ribose 5-phosphate + D-glyceraldehyde 3-phosphate + L-glutamine = pyridoxal 5'-phosphate + L-glutamate + phosphate + 3 H2O + H(+). The enzyme catalyses L-glutamine + H2O = L-glutamate + NH4(+). It functions in the pathway cofactor biosynthesis; pyridoxal 5'-phosphate biosynthesis. Functionally, catalyzes the hydrolysis of glutamine to glutamate and ammonia as part of the biosynthesis of pyridoxal 5'-phosphate. The resulting ammonia molecule is channeled to the active site of PdxS. The protein is Pyridoxal 5'-phosphate synthase subunit PdxT of Pseudothermotoga lettingae (strain ATCC BAA-301 / DSM 14385 / NBRC 107922 / TMO) (Thermotoga lettingae).